The primary structure comprises 216 residues: Pyridoxine/pyridoxamine 5'-phosphate oxidase (216 aa).

Substrate-binding positions include 12 to 15 (RREY) and K70. Residues 65–70 (RVVLLK), 80–81 (YT), R86, K87, and Q109 contribute to the FMN site. The substrate site is built by Y127 and R131. FMN-binding positions include 144–145 (QS) and W189. 195–197 (RLH) provides a ligand contact to substrate. Position 199 (R199) interacts with FMN.

It belongs to the pyridoxamine 5'-phosphate oxidase family. Homodimer. Requires FMN as cofactor.

It carries out the reaction pyridoxamine 5'-phosphate + O2 + H2O = pyridoxal 5'-phosphate + H2O2 + NH4(+). The enzyme catalyses pyridoxine 5'-phosphate + O2 = pyridoxal 5'-phosphate + H2O2. The protein operates within cofactor metabolism; pyridoxal 5'-phosphate salvage; pyridoxal 5'-phosphate from pyridoxamine 5'-phosphate: step 1/1. Its pathway is cofactor metabolism; pyridoxal 5'-phosphate salvage; pyridoxal 5'-phosphate from pyridoxine 5'-phosphate: step 1/1. Its function is as follows. Catalyzes the oxidation of either pyridoxine 5'-phosphate (PNP) or pyridoxamine 5'-phosphate (PMP) into pyridoxal 5'-phosphate (PLP). This is Pyridoxine/pyridoxamine 5'-phosphate oxidase from Blochmanniella pennsylvanica (strain BPEN).